The following is a 351-amino-acid chain: Cytosolic sulfotransferase 11 (351 aa).

98-103 provides a ligand contact to 3'-phosphoadenylyl sulfate; it reads KGGTTW. Residue H163 is the Proton acceptor of the active site. Residues R184, S192, Y250, and 316-318 each bind 3'-phosphoadenylyl sulfate; that span reads RKG.

It belongs to the sulfotransferase 1 family.

The protein localises to the cytoplasm. Its function is as follows. Sulfotransferase that utilizes 3'-phospho-5'-adenylyl sulfate (PAPS) as sulfonate donor. The sequence is that of Cytosolic sulfotransferase 11 (SOT11) from Arabidopsis thaliana (Mouse-ear cress).